Reading from the N-terminus, the 272-residue chain is Shikimate dehydrogenase (NADP(+)) (272 aa).

Shikimate is bound by residues 14–16 (SKS) and Thr-61. Lys-65 (proton acceptor) is an active-site residue. An NADP(+)-binding site is contributed by Glu-77. The shikimate site is built by Asn-86 and Asp-102. NADP(+) contacts are provided by residues 126–130 (GAGGA), 149–154 (NRTVSR), and Met-213. Residue Tyr-215 coordinates shikimate. Position 237 (Gly-237) interacts with NADP(+).

The protein belongs to the shikimate dehydrogenase family. In terms of assembly, homodimer.

The enzyme catalyses shikimate + NADP(+) = 3-dehydroshikimate + NADPH + H(+). It participates in metabolic intermediate biosynthesis; chorismate biosynthesis; chorismate from D-erythrose 4-phosphate and phosphoenolpyruvate: step 4/7. In terms of biological role, involved in the biosynthesis of the chorismate, which leads to the biosynthesis of aromatic amino acids. Catalyzes the reversible NADPH linked reduction of 3-dehydroshikimate (DHSA) to yield shikimate (SA). This Escherichia coli O6:H1 (strain CFT073 / ATCC 700928 / UPEC) protein is Shikimate dehydrogenase (NADP(+)).